We begin with the raw amino-acid sequence, 273 residues long: DnaJ homolog subfamily C member 27 (273 aa).

A required for interaction with MAPK1 region spans residues 1 to 18; the sequence is METNVPKRKEPAKSLRIK. GTP-binding positions include 23–30, 71–75, and 134–137; these read GNAEVGKS, DMAGH, and NKID. Residues 217–273 form the J domain; sequence DSWEMLGVRPGASREEVNKAYRKLAVLLHPDKCVAPGSEDAFKAVVNARTALLKNIK.

This sequence belongs to the small GTPase superfamily. Rab family. Interacts directly with MAPK1 (wild-type and kinase-deficient forms). Interacts directly (in GTP-bound form) with MAP2K1 (wild-type and kinase-deficient forms).

The protein resides in the nucleus. Its function is as follows. GTPase which can activate the MEK/ERK pathway and induce cell transformation when overexpressed. May act as a nuclear scaffold for MAPK1, probably by association with MAPK1 nuclear export signal leading to enhanced ERK1/ERK2 signaling. This is DnaJ homolog subfamily C member 27 (Dnajc27) from Mus musculus (Mouse).